A 137-amino-acid polypeptide reads, in one-letter code: Ribosomal RNA large subunit methyltransferase H (137 aa).

Residues leucine 56, glycine 85, and 104-109 (LSPLTL) contribute to the S-adenosyl-L-methionine site.

This sequence belongs to the RNA methyltransferase RlmH family. In terms of assembly, homodimer.

It localises to the cytoplasm. It catalyses the reaction pseudouridine(1915) in 23S rRNA + S-adenosyl-L-methionine = N(3)-methylpseudouridine(1915) in 23S rRNA + S-adenosyl-L-homocysteine + H(+). In terms of biological role, specifically methylates the pseudouridine at position 1915 (m3Psi1915) in 23S rRNA. In Thermus thermophilus (strain ATCC 27634 / DSM 579 / HB8), this protein is Ribosomal RNA large subunit methyltransferase H.